We begin with the raw amino-acid sequence, 492 residues long: Catalase-1 (492 aa).

Active-site residues include His-65 and Asn-138. Tyr-348 provides a ligand contact to heme.

The protein belongs to the catalase family. Homotetramer. Requires heme as cofactor.

The protein resides in the peroxisome. It localises to the glyoxysome. The catalysed reaction is 2 H2O2 = O2 + 2 H2O. Its function is as follows. Occurs in almost all aerobically respiring organisms and serves to protect cells from the toxic effects of hydrogen peroxide. This is Catalase-1 (CAT1) from Triticum aestivum (Wheat).